The primary structure comprises 408 residues: Arginine biosynthesis bifunctional protein ArgJ (408 aa).

Residues threonine 158, lysine 184, threonine 195, glutamate 281, asparagine 403, and threonine 408 each coordinate substrate. The Nucleophile role is filled by threonine 195.

Belongs to the ArgJ family. Heterotetramer of two alpha and two beta chains.

Its subcellular location is the cytoplasm. The catalysed reaction is N(2)-acetyl-L-ornithine + L-glutamate = N-acetyl-L-glutamate + L-ornithine. It carries out the reaction L-glutamate + acetyl-CoA = N-acetyl-L-glutamate + CoA + H(+). It participates in amino-acid biosynthesis; L-arginine biosynthesis; L-ornithine and N-acetyl-L-glutamate from L-glutamate and N(2)-acetyl-L-ornithine (cyclic): step 1/1. It functions in the pathway amino-acid biosynthesis; L-arginine biosynthesis; N(2)-acetyl-L-ornithine from L-glutamate: step 1/4. Its function is as follows. Catalyzes two activities which are involved in the cyclic version of arginine biosynthesis: the synthesis of N-acetylglutamate from glutamate and acetyl-CoA as the acetyl donor, and of ornithine by transacetylation between N(2)-acetylornithine and glutamate. The sequence is that of Arginine biosynthesis bifunctional protein ArgJ from Bacillus thuringiensis subsp. konkukian (strain 97-27).